Consider the following 138-residue polypeptide: Beta-galactosidase (138 aa).

This sequence belongs to the glycosyl hydrolase 2 family.

It catalyses the reaction Hydrolysis of terminal non-reducing beta-D-galactose residues in beta-D-galactosides.. This Rhizobium radiobacter (Agrobacterium tumefaciens) protein is Beta-galactosidase (lacZ).